A 375-amino-acid chain; its full sequence is Chaperone protein DnaJ 1 (375 aa).

The region spanning 4-68 (DYYAILGVER…EKRRIVDMGG (65 aa)) is the J domain. The CR-type zinc-finger motif lies at 127 to 209 (GTKKPITIDT…CGGDGRVRTQ (83 aa)). 8 residues coordinate Zn(2+): Cys-140, Cys-143, Cys-157, Cys-160, Cys-183, Cys-186, Cys-197, and Cys-200. CXXCXGXG motif repeat units follow at residues 140–147 (CDRCEGTG), 157–164 (CSTCNGSG), 183–190 (CPTCRGTG), and 197–204 (CDKCGGDG).

This sequence belongs to the DnaJ family. In terms of assembly, homodimer. The cofactor is Zn(2+).

It localises to the cytoplasm. Functionally, participates actively in the response to hyperosmotic and heat shock by preventing the aggregation of stress-denatured proteins and by disaggregating proteins, also in an autonomous, DnaK-independent fashion. Unfolded proteins bind initially to DnaJ; upon interaction with the DnaJ-bound protein, DnaK hydrolyzes its bound ATP, resulting in the formation of a stable complex. GrpE releases ADP from DnaK; ATP binding to DnaK triggers the release of the substrate protein, thus completing the reaction cycle. Several rounds of ATP-dependent interactions between DnaJ, DnaK and GrpE are required for fully efficient folding. Also involved, together with DnaK and GrpE, in the DNA replication of plasmids through activation of initiation proteins. In Corynebacterium diphtheriae (strain ATCC 700971 / NCTC 13129 / Biotype gravis), this protein is Chaperone protein DnaJ 1.